An 876-amino-acid polypeptide reads, in one-letter code: Liprin-beta-2 (876 aa).

A coiled-coil region spans residues 101-313 (AASNETYQER…TGLLNQYRKV (213 aa)). Residues S329, S363, and S387 each carry the phosphoserine modification. The segment at 356–376 (EMPPRCSSPTVGPPPLPQKSL) is disordered. Disordered stretches follow at residues 425-451 (LPGK…PDAT) and 470-500 (VVND…PKGI). The segment covering 473 to 489 (DLSSTSSGTESGPQSPL) has biased composition (polar residues). Residue S512 is modified to Phosphoserine. The tract at residues 527-553 (RGGLRATAGPRLSRTRDSKGQKSDANA) is disordered. 3 SAM domains span residues 558–622 (WSTE…INTK), 630–693 (LDHI…LHVN), and 718–783 (WSNH…KFNA).

The protein belongs to the liprin family. Liprin-beta subfamily. In terms of assembly, forms homodimers and heterodimers. In terms of tissue distribution, widely expressed.

Its function is as follows. May regulate the disassembly of focal adhesions. Did not bind receptor-like tyrosine phosphatases type 2A. The chain is Liprin-beta-2 (PPFIBP2) from Homo sapiens (Human).